A 187-amino-acid chain; its full sequence is MANQLQVPKQKLAKPPLAIHTLGDRVLRQGSKQISGINDEVRKLAQQMLQTMYSADGIGLAAPQVGVNKRMIVVDIDPENAARPPLVLINPLIKQFSSDLAVDQEGCLSVPSIYADVRRPERVVATYRDLNGRPVTLEATGLLARCIQHEIDHLDGVLFVDRVENQIALAPQLVEKGFAVRDVQVRA.

Fe cation is bound by residues C107 and H149. Residue E150 is part of the active site. H153 serves as a coordination point for Fe cation.

This sequence belongs to the polypeptide deformylase family. Requires Fe(2+) as cofactor.

It carries out the reaction N-terminal N-formyl-L-methionyl-[peptide] + H2O = N-terminal L-methionyl-[peptide] + formate. Removes the formyl group from the N-terminal Met of newly synthesized proteins. Requires at least a dipeptide for an efficient rate of reaction. N-terminal L-methionine is a prerequisite for activity but the enzyme has broad specificity at other positions. This Gloeobacter violaceus (strain ATCC 29082 / PCC 7421) protein is Peptide deformylase 2.